A 429-amino-acid polypeptide reads, in one-letter code: Probable beta-1,3-galactosyl-O-glycosyl-glycoprotein beta-1,6-N-acetylglucosaminyltransferase 7 (429 aa).

Over 1-8 (MSQLRATK) the chain is Cytoplasmic. Residues 9–25 (PGILVCAAIGIFVFLYL) traverse the membrane as a helical; Signal-anchor for type II membrane protein segment. Over 26-429 (RNPTSEDPEE…ESHLNRRLNP (404 aa)) the chain is Extracellular. 4 disulfides stabilise this stretch: Cys-53-Cys-205, Cys-139-Cys-354, Cys-160-Cys-187, and Cys-363-Cys-394. N-linked (GlcNAc...) asparagine glycosylation is present at Asn-87. N-linked (GlcNAc...) asparagine glycosylation occurs at Asn-272.

This sequence belongs to the glycosyltransferase 14 family.

The protein localises to the golgi apparatus membrane. Its pathway is protein modification; protein glycosylation. Probable glycosyltransferase. The protein is Probable beta-1,3-galactosyl-O-glycosyl-glycoprotein beta-1,6-N-acetylglucosaminyltransferase 7 of Sus scrofa (Pig).